The following is a 590-amino-acid chain: Aspartate--tRNA ligase (590 aa).

Glutamate 172 serves as a coordination point for L-aspartate. The aspartate stretch occupies residues 196–199 (QLFK). Arginine 218 contributes to the L-aspartate binding site. ATP is bound by residues 218-220 (RDE) and glutamine 227. Histidine 449 provides a ligand contact to L-aspartate. Residue glutamate 483 coordinates ATP. Residue arginine 490 participates in L-aspartate binding. An ATP-binding site is contributed by 535-538 (GLDR).

The protein belongs to the class-II aminoacyl-tRNA synthetase family. Type 1 subfamily. Homodimer.

It is found in the cytoplasm. The catalysed reaction is tRNA(Asp) + L-aspartate + ATP = L-aspartyl-tRNA(Asp) + AMP + diphosphate. Functionally, catalyzes the attachment of L-aspartate to tRNA(Asp) in a two-step reaction: L-aspartate is first activated by ATP to form Asp-AMP and then transferred to the acceptor end of tRNA(Asp). This chain is Aspartate--tRNA ligase, found in Mannheimia succiniciproducens (strain KCTC 0769BP / MBEL55E).